The sequence spans 631 residues: Phosphomethylpyrimidine synthase (631 aa).

Substrate is bound by residues asparagine 239, methionine 268, tyrosine 297, histidine 333, 353–355, 394–397, and glutamate 433; these read SRG and DGLR. Zn(2+) is bound at residue histidine 437. Position 460 (tyrosine 460) interacts with substrate. Zn(2+) is bound at residue histidine 501. [4Fe-4S] cluster is bound by residues cysteine 581, cysteine 584, and cysteine 589.

It belongs to the ThiC family. As to quaternary structure, homodimer. Requires [4Fe-4S] cluster as cofactor.

The catalysed reaction is 5-amino-1-(5-phospho-beta-D-ribosyl)imidazole + S-adenosyl-L-methionine = 4-amino-2-methyl-5-(phosphooxymethyl)pyrimidine + CO + 5'-deoxyadenosine + formate + L-methionine + 3 H(+). It participates in cofactor biosynthesis; thiamine diphosphate biosynthesis. Functionally, catalyzes the synthesis of the hydroxymethylpyrimidine phosphate (HMP-P) moiety of thiamine from aminoimidazole ribotide (AIR) in a radical S-adenosyl-L-methionine (SAM)-dependent reaction. This Escherichia coli O45:K1 (strain S88 / ExPEC) protein is Phosphomethylpyrimidine synthase.